The sequence spans 165 residues: Phosphopantetheine adenylyltransferase (165 aa).

Threonine 9 is a substrate binding site. ATP is bound by residues 9 to 10 (TF) and histidine 17. Residues lysine 41, leucine 78, and arginine 92 each coordinate substrate. ATP is bound by residues 93-95 (GLR), glutamate 103, and 128-134 (HQAIASK).

This sequence belongs to the bacterial CoaD family. In terms of assembly, homohexamer. Mg(2+) is required as a cofactor.

The protein resides in the cytoplasm. The catalysed reaction is (R)-4'-phosphopantetheine + ATP + H(+) = 3'-dephospho-CoA + diphosphate. Its pathway is cofactor biosynthesis; coenzyme A biosynthesis; CoA from (R)-pantothenate: step 4/5. In terms of biological role, reversibly transfers an adenylyl group from ATP to 4'-phosphopantetheine, yielding dephospho-CoA (dPCoA) and pyrophosphate. In Ruegeria sp. (strain TM1040) (Silicibacter sp.), this protein is Phosphopantetheine adenylyltransferase.